The chain runs to 1088 residues: Protocadherin-19 (1088 aa).

The N-terminal stretch at 1-24 (MHSKDMDFVQMFVCFLLCWTGVDA) is a signal peptide. At 25–678 (VFNLKYTVEE…QEQIGPVNLS (654 aa)) the chain is on the extracellular side. Cadherin domains follow at residues 31–130 (TVEE…APRF), 131–239 (PTNH…NPVF), 240–347 (DEPV…APEI), 351–454 (SENS…PPYF), 455–563 (TKPH…TPVM), and 569–676 (VNGT…GPVN). Ca(2+)-binding residues include Glu34 and Glu35. The N-linked (GlcNAc...) asparagine glycan is linked to Asn44. Residues Asp89 and Asp91 each coordinate Ca(2+). A disulfide bond links Cys94 and Cys100. Ca(2+) contacts are provided by Asp122, Val123, Asn124, Asp125, Asn126, Glu141, Asp156, Asp158, Asn162, Glu200, Asp213, Asp231, Ser232, Asn233, Asp234, Asn235, and Glu250. Asn262 carries N-linked (GlcNAc...) asparagine glycosylation. Ca(2+) contacts are provided by Asp265, Asp267, and Asn271. N-linked (GlcNAc...) asparagine glycosylation occurs at Asn284. Ca(2+)-binding residues include Asp306, Glu308, Asp339, Ile340, Asn341, Asp342, Asn343, Glu361, and Asp376. N-linked (GlcNAc...) asparagine glycosylation occurs at Asn377. Residues Asp378, Asn382, Asp413, and Glu415 each coordinate Ca(2+). The N-linked (GlcNAc...) asparagine glycan is linked to Asn421. Residues Asp428, Asp446, Glu447, Asn448, Asp449, Asn450, Glu465, Asp480, Asp482, Asn486, Asn522, Glu524, and Asp537 each coordinate Ca(2+). The N-linked (GlcNAc...) asparagine glycan is linked to Asn486. A glycan (N-linked (GlcNAc...) asparagine) is linked at Asn546. The Ca(2+) site is built by Asp555, Val556, Asn557, Asp558, and Asn559. N-linked (GlcNAc...) asparagine glycosylation occurs at Asn570. Ca(2+)-binding residues include Asp594, Asp596, Asn600, and Asp646. N-linked (GlcNAc...) asparagine glycosylation is present at Asn676. The chain crosses the membrane as a helical span at residues 679-699 (LIFIIALGSIAVILFVTMIFV). Residues 700–1088 (AVKCKRDNKE…GSKRLKDIVL (389 aa)) lie on the Cytoplasmic side of the membrane. 4 disordered regions span residues 792–813 (NSRN…GPQQ), 851–875 (DMEG…HDVQ), 970–1032 (TFGK…ASST), and 1067–1088 (TLLQ…DIVL). Basic and acidic residues predominate over residues 859–875 (DSGHEESDQTDSEHDVQ). Residues 1071 to 1088 (DGRDKESPGSKRLKDIVL) are compositionally biased toward basic and acidic residues.

As to quaternary structure, homodimer; antiparallel. Interacts with cadherin cdh2; the interaction confers robust cell adhesion activity on pcdh19. In the embryo, strongly expressed in the developing nervous system. At 12 hours post fertilization (hpf), shows a segmental expression pattern in the anterior third of the neural keel with strong expression in the presumptive forebrain, cerebellum/rhombomere 1 and rhombomere 4. By 24 hpf, expressed widely in the brain and spinal cord with higher expression levels in the ventral telencephalon, dorsal and central thalamus, optic tectum, central tegmentum, cerebellum and dorsolateral regions of the hindbrain. As development proceeds, expression becomes restricted to the dorsal and/or lateral regions of the central nervous system. Not detected in the spinal cord of two- and three-day old embryos. Expressed in the eye primordium, developing retina, lens and otic vesicle. Expressed in the larval optic tectum at 4 days post-fertilization where it localizes in discrete columns of neurons. Expressed throughout the adult brain with strong expression in the ventromedial telencephalon, periventricular regions of the thalamus and anterior hypothalamus, stratum periventriculare of the optic tectum, dorsal tegmental nucleus, granular regions of the cerebellar body and valvula, and superficial layers of the facial and vagal lobes.

Its subcellular location is the cell membrane. Functionally, calcium-dependent cell-adhesion protein. Essential for the early stages of neurulation in the anterior neural plate. Shows little cell adhesion activity on its own but exhibits robust homophilic cell adhesion when in a complex with cadherin cdh2 and appears to mediate the adhesion while cdh2 acts as a cell adhesion cofactor in the complex. Functions with cdh2 to coordinate cell adhesion and cell movements during neurulation. Contributes to neural progenitor cell patterning with cdh2 by promoting homophilic cell interactions. Regulates the columnar organization of neurons in the optic tectum. The chain is Protocadherin-19 from Danio rerio (Zebrafish).